The chain runs to 231 residues: MHIFEGFLPGPWWQIWWILSIPVFAYGIFRLNKLVKEKPEVLPLIAVSGAVIFVLSSLKLPSVTGSTSHPTGTGMAVILFGPAITSVLSAIVLLYQALFLAHGGITTFGANLMSMGIIGPFVAYAIYKTMMRLNVNFYVSAFVTATLADWVTYVVTSTQLALAFPANPGGVEGSLVAFLSVFAITQIPLAILEASLITLLFKYVLQAKGDLMVRLDVLTDSQVRKLKETKA.

Transmembrane regions (helical) follow at residues Pro9–Phe29, Val41–Pro61, Gly74–Leu94, Thr107–Tyr127, Val135–Val155, and Val181–Phe201.

The protein belongs to the CbiM family. As to quaternary structure, forms an energy-coupling factor (ECF) transporter complex composed of an ATP-binding protein (A component, CbiO), a transmembrane protein (T component, CbiQ) and 2 possible substrate-capture proteins (S components, CbiM and CbiN) of unknown stoichimetry.

The protein resides in the cell membrane. It functions in the pathway cofactor biosynthesis; adenosylcobalamin biosynthesis. Its function is as follows. Part of the energy-coupling factor (ECF) transporter complex CbiMNOQ involved in cobalt import. This chain is Putative cobalt transport protein CbiM 1, found in Methanosarcina barkeri (strain Fusaro / DSM 804).